A 292-amino-acid chain; its full sequence is Probable 2-(5''-triphosphoribosyl)-3'-dephosphocoenzyme-A synthase (292 aa).

It belongs to the CitG/MdcB family.

It carries out the reaction 3'-dephospho-CoA + ATP = 2'-(5''-triphospho-alpha-D-ribosyl)-3'-dephospho-CoA + adenine. In Shigella flexneri serotype 5b (strain 8401), this protein is Probable 2-(5''-triphosphoribosyl)-3'-dephosphocoenzyme-A synthase.